Here is a 254-residue protein sequence, read N- to C-terminus: Nickel import ATP-binding protein NikD (254 aa).

The region spanning 2–241 (PQQIELRNIA…PKHTVTRSLV (240 aa)) is the ABC transporter domain. Position 36-43 (36-43 (GGSGSGKS)) interacts with ATP.

The protein belongs to the ABC transporter superfamily. Nickel importer (TC 3.A.1.5.3) family. As to quaternary structure, the complex is composed of two ATP-binding proteins (NikD and NikE), two transmembrane proteins (NikB and NikC) and a solute-binding protein (NikA).

The protein localises to the cell inner membrane. It carries out the reaction Ni(2+)(out) + ATP + H2O = Ni(2+)(in) + ADP + phosphate + H(+). Functionally, part of the ABC transporter complex NikABCDE involved in nickel import. Responsible for energy coupling to the transport system. This chain is Nickel import ATP-binding protein NikD, found in Escherichia coli (strain K12).